We begin with the raw amino-acid sequence, 351 residues long: Glycerol-3-phosphate dehydrogenase [NAD(P)+] (351 aa).

NADPH-binding residues include S12, W13, H33, and K114. Residues K114, G145, and S147 each contribute to the sn-glycerol 3-phosphate site. A149 is a binding site for NADPH. Residues K200, D253, S263, R264, and N265 each contribute to the sn-glycerol 3-phosphate site. The Proton acceptor role is filled by K200. R264 is a binding site for NADPH. V288 and E290 together coordinate NADPH.

Belongs to the NAD-dependent glycerol-3-phosphate dehydrogenase family.

It localises to the cytoplasm. The enzyme catalyses sn-glycerol 3-phosphate + NAD(+) = dihydroxyacetone phosphate + NADH + H(+). It carries out the reaction sn-glycerol 3-phosphate + NADP(+) = dihydroxyacetone phosphate + NADPH + H(+). It participates in membrane lipid metabolism; glycerophospholipid metabolism. Functionally, catalyzes the reduction of the glycolytic intermediate dihydroxyacetone phosphate (DHAP) to sn-glycerol 3-phosphate (G3P), the key precursor for phospholipid synthesis. This Lacticaseibacillus paracasei (strain ATCC 334 / BCRC 17002 / CCUG 31169 / CIP 107868 / KCTC 3260 / NRRL B-441) (Lactobacillus paracasei) protein is Glycerol-3-phosphate dehydrogenase [NAD(P)+].